The primary structure comprises 215 residues: Large ribosomal subunit protein uL4 (215 aa).

Residues threonine 46 to isoleucine 76 form a disordered region. The segment covering serine 56–alanine 71 has biased composition (gly residues).

Belongs to the universal ribosomal protein uL4 family. Part of the 50S ribosomal subunit.

One of the primary rRNA binding proteins, this protein initially binds near the 5'-end of the 23S rRNA. It is important during the early stages of 50S assembly. It makes multiple contacts with different domains of the 23S rRNA in the assembled 50S subunit and ribosome. In terms of biological role, forms part of the polypeptide exit tunnel. This Helicobacter acinonychis (strain Sheeba) protein is Large ribosomal subunit protein uL4.